A 332-amino-acid polypeptide reads, in one-letter code: Large ribosomal subunit protein mL44 (332 aa).

A mitochondrion-targeting transit peptide spans 1–30 (MASGLVRLLQQGPRCLLAPVAPKLVPPVRG). An RNase III domain is found at 86-228 (DLLKTAFVNS…LITQMTGKEL (143 aa)). A DRBM domain is found at 236–306 (NPMGLLVEEL…ARVALRKLYG (71 aa)).

It belongs to the ribonuclease III family. Mitochondrion-specific ribosomal protein mL44 subfamily. As to quaternary structure, component of the mitochondrial ribosome large subunit (39S) which comprises a 16S rRNA and about 50 distinct proteins.

The protein resides in the mitochondrion. In terms of biological role, component of the 39S subunit of mitochondrial ribosome. May have a function in the assembly/stability of nascent mitochondrial polypeptides exiting the ribosome. The chain is Large ribosomal subunit protein mL44 (MRPL44) from Pongo abelii (Sumatran orangutan).